Consider the following 903-residue polypeptide: Pentatricopeptide repeat-containing protein At3g02330, mitochondrial (903 aa).

The N-terminal 31 residues, 1–31, are a transit peptide targeting the mitochondrion; it reads MAESLRLLHMTRSVVSFNRCLTEKISYRRVP. 20 PPR repeats span residues 47–81, 82–112, 113–143, 144–178, 179–213, 214–244, 245–279, 280–314, 346–380, 381–415, 416–446, 447–481, 482–515, 516–550, 567–601, 602–636, 637–667, 668–702, 703–738, and 739–769; these read STTNFSFVFKECAKQGALELGKQAHAHMIISGFRP, TTFVLNCLLQVYTNSRDFVSASMVFDKMPLR, DVVSWNKMINGYSKSNDMFKANSFFNMMPVR, DVVSWNSMLSGYLQNGESLKSIEVFVDMGREGIEF, DGRTFAIILKVCSFLEDTSLGMQIHGIVVRVGCDT, DVVAASALLDMYAKGKRFVESLRVFQGIPEK, NSVSWSAIIAGCVQNNLLSLALKFFKEMQKVNAGV, SQSIYASVLRSCAALSELRLGGQLHAHALKSDFAA, NRQSYNAMITGYSQEEHGFKALLLFHRLMSSGLGF, DEISLSGVFRACALVKGLSEGLQIYGLAIKSSLSL, DVCVANAAIDMYGKCQALAEAFRVFDEMRRR, DAVSWNAIIAAHEQNGKGYETLFLFVSMLRSRIEP, DEFTFGSILKACTGGSLGYGMEIHSSIVKSGMAS, NSSVGCSLIDMYSKCGMIEEAEKIHSRFFQRANVS, MCVSWNSIISGYVMKEQSEDAQMLFTRMMEMGITP, DKFTYATVLDTCANLASAGLGKQIHAQVIKKELQS, DVYICSTLVDMYSKCGDLHDSRLMFEKSLRR, DFVTWNAMICGYAHHGKGEEAIQLFERMILENIKP, NHVTFISILRACAHMGLIDKGLEYFYMMKRDYGLDP, and QLPHYSNMVDILGKSGKVKRALELIREMPFE. The tract at residues 774-850 is type E motif; sequence IWRTLLGVCT…EPGCSWVELK (77 aa). The segment at 851 to 881 is type E(+) motif; sequence DELHVFLVGDKAHPRWEEIYEELGLIYSEMK.

Belongs to the PPR family. PCMP-E subfamily. Interacts with MORF1/RIP8.

It localises to the mitochondrion. Its function is as follows. Involved in C-to-U editing of mitochondrial RNA. Required for RNA editing at 8 sites in 6 different mRNAs in mitochondria. In Arabidopsis thaliana (Mouse-ear cress), this protein is Pentatricopeptide repeat-containing protein At3g02330, mitochondrial (PCMP-E90).